A 293-amino-acid chain; its full sequence is ATP synthase gamma chain (293 aa).

This sequence belongs to the ATPase gamma chain family. In terms of assembly, F-type ATPases have 2 components, CF(1) - the catalytic core - and CF(0) - the membrane proton channel. CF(1) has five subunits: alpha(3), beta(3), gamma(1), delta(1), epsilon(1). CF(0) has three main subunits: a, b and c.

Its subcellular location is the cell membrane. Functionally, produces ATP from ADP in the presence of a proton gradient across the membrane. The gamma chain is believed to be important in regulating ATPase activity and the flow of protons through the CF(0) complex. This is ATP synthase gamma chain from Streptococcus gordonii (strain Challis / ATCC 35105 / BCRC 15272 / CH1 / DL1 / V288).